The following is a 322-amino-acid chain: Methionyl-tRNA formyltransferase (322 aa).

(6S)-5,6,7,8-tetrahydrofolate is bound at residue 113–116 (SLLP).

The protein belongs to the Fmt family.

The enzyme catalyses L-methionyl-tRNA(fMet) + (6R)-10-formyltetrahydrofolate = N-formyl-L-methionyl-tRNA(fMet) + (6S)-5,6,7,8-tetrahydrofolate + H(+). In terms of biological role, attaches a formyl group to the free amino group of methionyl-tRNA(fMet). The formyl group appears to play a dual role in the initiator identity of N-formylmethionyl-tRNA by promoting its recognition by IF2 and preventing the misappropriation of this tRNA by the elongation apparatus. The polypeptide is Methionyl-tRNA formyltransferase (Blochmanniella pennsylvanica (strain BPEN)).